A 356-amino-acid polypeptide reads, in one-letter code: Epoxide hydrolase B (356 aa).

The region spanning 28–129 (PLVVLLHGFP…RCAGVVGISV (102 aa)) is the AB hydrolase-1 domain. D104 functions as the Nucleophile in the catalytic mechanism. H333 acts as the Proton acceptor in catalysis.

It belongs to the AB hydrolase superfamily. Epoxide hydrolase family. As to quaternary structure, homodimer.

The catalysed reaction is an epoxide + H2O = an ethanediol. Functionally, could be involved in detoxification of extraneous host-cell epoxides. Catalyzes the hydrolysis of small aromatic epoxide-containing substrates such as trans-1,3-diphenylpropene oxide, trans and cis-stilbene oxide, and terpenoid epoxide. In Mycobacterium tuberculosis (strain CDC 1551 / Oshkosh), this protein is Epoxide hydrolase B.